A 140-amino-acid chain; its full sequence is HTH-type transcriptional regulator YfmP (140 aa).

One can recognise an HTH merR-type domain in the interval Met1–Thr73. The H-T-H motif DNA-binding region spans Ile6–Glu25.

Functionally, repressor of the yfmOP operon. A mutation in yfmP leads to overexpression of yfmO, probably causing a decrease in cellular copper that is eventually responsible for a reduced copper induction of copZA. This Bacillus subtilis (strain 168) protein is HTH-type transcriptional regulator YfmP (yfmP).